Consider the following 857-residue polypeptide: RNA-directed RNA polymerase 2a (857 aa).

A RdRp catalytic domain is found at 511 to 624 (KYCLEIDLSK…FSQLPPVGDS (114 aa)). A disordered region spans residues 775–857 (RKKHGIERRC…PCERGEGTRA (83 aa)). Composition is skewed to polar residues over residues 804–816 (KVSQ…TRSQ) and 824–840 (FKSQ…SGRS).

The protein belongs to the ssRNA positive-strand viruses RNA-directed RNA polymerase family. Interacts with replication protein 1a.

The catalysed reaction is RNA(n) + a ribonucleoside 5'-triphosphate = RNA(n+1) + diphosphate. RNA-dependent RNA polymerase which replicates the viral genome composed of 3 RNA segments, RNA1, RNA2 and RNA3. The sequence is that of RNA-directed RNA polymerase 2a from Cucumber mosaic virus (strain B) (CMV).